We begin with the raw amino-acid sequence, 64 residues long: Large ribosomal subunit protein bL28 (64 aa).

This sequence belongs to the bacterial ribosomal protein bL28 family.

The sequence is that of Large ribosomal subunit protein bL28 (rpmB) from Mycobacterium leprae (strain TN).